Consider the following 281-residue polypeptide: Lectin CaBo (281 aa).

The signal sequence occupies residues 1–29 (MAISKKSSLYLPIFTFITMLLMVVNKVSS). Residue Asp-119 participates in Ca(2+) binding. Arg-139 is a binding site for a carbohydrate. Positions 149–163 (IIKNSTTIDFNAAYN) are cleaved as a propeptide — removed in mature form. 2 residues coordinate Mn(2+): Glu-171 and Asp-173. Residues Asp-173, Tyr-175, Asn-177, and Asp-182 each coordinate Ca(2+). A carbohydrate is bound at residue Tyr-175. Mn(2+) is bound by residues Asp-182 and His-187. 262 to 263 (LY) lines the a carbohydrate pocket.

The protein belongs to the leguminous lectin family. In terms of assembly, equilibrium between homodimer and homotetramer. In terms of processing, the mature chain consists of residues 164-281 followed by residues 30-148. Concanavalin A-like lectins of the Diocleinae subtribe undergo proteolytic processing referred to as circular permutation. The propeptide is split into an N-terminal and a C-terminal part, the gamma and beta chain, respectively. These are then religated in beta-gamma order to form the mature alpha chain. The beta and gamma chains can often be detected in cell extracts.

Its function is as follows. D-mannose-specific lectin. The sequence is that of Lectin CaBo from Canavalia bonariensis.